Consider the following 645-residue polypeptide: Acetyl-coenzyme A synthetase (645 aa).

Residues 190–193 (RGGR) and T308 each bind CoA. Residues 384-386 (GEP), 408-413 (DTWWQT), D497, and R512 each bind ATP. S520 provides a ligand contact to CoA. R523 serves as a coordination point for ATP. Residues V534, H536, and V539 each coordinate Mg(2+). K606 carries the post-translational modification N6-acetyllysine.

The protein belongs to the ATP-dependent AMP-binding enzyme family. Mg(2+) is required as a cofactor. Acetylated. Deacetylation by the SIR2-homolog deacetylase activates the enzyme.

The enzyme catalyses acetate + ATP + CoA = acetyl-CoA + AMP + diphosphate. Catalyzes the conversion of acetate into acetyl-CoA (AcCoA), an essential intermediate at the junction of anabolic and catabolic pathways. AcsA undergoes a two-step reaction. In the first half reaction, AcsA combines acetate with ATP to form acetyl-adenylate (AcAMP) intermediate. In the second half reaction, it can then transfer the acetyl group from AcAMP to the sulfhydryl group of CoA, forming the product AcCoA. The polypeptide is Acetyl-coenzyme A synthetase (Alkalilimnicola ehrlichii (strain ATCC BAA-1101 / DSM 17681 / MLHE-1)).